A 147-amino-acid polypeptide reads, in one-letter code: uncharacterized protein (147 aa).

Residues 63 to 79 form a helical membrane-spanning segment; it reads LFIVACSAVFATIAYIN.

It belongs to the FUN14 family.

The protein resides in the membrane. This is an uncharacterized protein from Schizosaccharomyces pombe (strain 972 / ATCC 24843) (Fission yeast).